Here is a 94-residue protein sequence, read N- to C-terminus: Co-chaperonin GroES (94 aa).

This sequence belongs to the GroES chaperonin family. In terms of assembly, heptamer of 7 subunits arranged in a ring. Interacts with the chaperonin GroEL.

Its subcellular location is the cytoplasm. In terms of biological role, together with the chaperonin GroEL, plays an essential role in assisting protein folding. The GroEL-GroES system forms a nano-cage that allows encapsulation of the non-native substrate proteins and provides a physical environment optimized to promote and accelerate protein folding. GroES binds to the apical surface of the GroEL ring, thereby capping the opening of the GroEL channel. The protein is Co-chaperonin GroES of Lactobacillus helveticus (strain DPC 4571).